Reading from the N-terminus, the 248-residue chain is Ferric nitrobindin-like protein (248 aa).

Composition is skewed to polar residues over residues 1–25 and 32–43; these read MSSD…TNSG and QAVNLAAEQSKS. Residues 1–49 are disordered; that stretch reads MSSDKANNQSPDQGANTPAESTNSGPKLDGNQAVNLAAEQSKSTADKNL. Positions 82 to 88 match the GXWXGXG motif; the sequence is GVWRGQG. The disordered stretch occupies residues 118–147; that stretch reads SRTWKINPPAEEGAEADGDEASAESAGEPE. Over residues 129–139 the composition is skewed to acidic residues; the sequence is EGAEADGDEAS.

This sequence belongs to the nitrobindin family.

This is Ferric nitrobindin-like protein from Corynebacterium urealyticum (strain ATCC 43042 / DSM 7109).